Consider the following 622-residue polypeptide: Polypeptide N-acetylgalactosaminyltransferase 6 (622 aa).

Residues 1–8 are Cytoplasmic-facing; the sequence is MRLLRRRH. Residues 9–28 form a helical; Signal-anchor for type II membrane protein membrane-spanning segment; it reads MSLRLAMLGSVFMLFLFIRQ. Residues 29–622 are Lumenal-facing; sequence KDVSNQEQAM…RDPYQLWLFV (594 aa). The N-linked (GlcNAc...) asparagine glycan is linked to asparagine 86. Residues 176–285 form a catalytic subdomain A region; it reads LPTTSVIIVF…HGWLEPLLAR (110 aa). Mn(2+)-binding residues include aspartate 269, histidine 271, and histidine 407. Residues 348–410 are catalytic subdomain B; it reads PIKSPTFAGG…PCSVVGHVFR (63 aa). Residue asparagine 476 is glycosylated (N-linked (GlcNAc...) asparagine). In terms of domain architecture, Ricin B-type lectin spans 506-622; it reads TNQCLDVGEN…RDPYQLWLFV (117 aa). Cysteine 509 and cysteine 527 are disulfide-bonded. The UDP-N-acetyl-alpha-D-galactosamine site is built by aspartate 511, glutamate 514, histidine 528, and asparagine 533. Disulfide bonds link cysteine 553-cysteine 566 and cysteine 597-cysteine 610.

It belongs to the glycosyltransferase 2 family. GalNAc-T subfamily. The cofactor is Mn(2+).

The protein localises to the golgi apparatus membrane. It catalyses the reaction L-seryl-[protein] + UDP-N-acetyl-alpha-D-galactosamine = a 3-O-[N-acetyl-alpha-D-galactosaminyl]-L-seryl-[protein] + UDP + H(+). The enzyme catalyses L-threonyl-[protein] + UDP-N-acetyl-alpha-D-galactosamine = a 3-O-[N-acetyl-alpha-D-galactosaminyl]-L-threonyl-[protein] + UDP + H(+). It participates in protein modification; protein glycosylation. In terms of biological role, catalyzes the initial reaction in O-linked oligosaccharide biosynthesis, the transfer of an N-acetyl-D-galactosamine residue to a serine or threonine residue on the protein receptor. May participate in synthesis of oncofetal fibronectin. Has activity toward Muc1a, Muc2, EA2 and fibronectin peptides. This is Polypeptide N-acetylgalactosaminyltransferase 6 (Galnt6) from Mus musculus (Mouse).